Consider the following 287-residue polypeptide: Large ribosomal subunit protein uL2 (287 aa).

The interval 220–287 is disordered; sequence VRGSVMNPCD…SKRSRGGRDS (68 aa). Basic residues predominate over residues 271-287; sequence VRRRRRISKRSRGGRDS.

It belongs to the universal ribosomal protein uL2 family. As to quaternary structure, part of the 50S ribosomal subunit. Forms a bridge to the 30S subunit in the 70S ribosome.

In terms of biological role, one of the primary rRNA binding proteins. Required for association of the 30S and 50S subunits to form the 70S ribosome, for tRNA binding and peptide bond formation. It has been suggested to have peptidyltransferase activity; this is somewhat controversial. Makes several contacts with the 16S rRNA in the 70S ribosome. The protein is Large ribosomal subunit protein uL2 of Prochlorococcus marinus (strain MIT 9515).